A 424-amino-acid polypeptide reads, in one-letter code: Putative chloroquine resistance transporter (424 aa).

The Cytoplasmic portion of the chain corresponds to 1 to 56 (MTVIKKGKNKKKNLKNDDRYKELDSLITNGSEIGDNSGRSCIKRFFKIIGNEMKNN). The chain crosses the membrane as a helical span at residues 57 to 77 (VYVYFLSILYLCVCVMNKVFA). Residues 78 to 88 (KRTLNKMGNYS) lie on the Vacuolar side of the membrane. Asparagine 86 carries N-linked (GlcNAc...) asparagine glycosylation. Residues 89-109 (FVTSETHNIICIVVFQLLYFI) form a helical membrane-spanning segment. Over 110–125 (YRKTSTSGYKNESQKN) the chain is Cytoplasmic. A helical membrane pass occupies residues 126 to 146 (FGWQFFLISLLDASTVIISMI). The Vacuolar portion of the chain corresponds to 147-156 (GLTRTTGNIQ). A helical transmembrane segment spans residues 157-177 (SFIMQLIIPVNMYFCFMFLGY). The Cytoplasmic portion of the chain corresponds to 178–180 (RYH). The helical transmembrane segment at 181-201 (LFNYLGAFIILITIAVVETFL) threads the bilayer. Over 202–209 (SFETQSEN) the chain is Vacuolar. Residues 210–230 (SIIFNLIMISALIPLSFSNMT) form a helical membrane-spanning segment. At 231–248 (REVVFKKHKINILRLNAM) the chain is on the cytoplasmic side. A helical transmembrane segment spans residues 249–269 (VVLFQFFTSLLVLPVYNIPFL). The Vacuolar portion of the chain corresponds to 270-317 (KEIYMPFSEMSTNINNGLRCLFYGQNTVVENCGVGMVKMCDNCEGAWK). 2 disulfides stabilise this stretch: cysteine 289/cysteine 312 and cysteine 301/cysteine 309. A helical transmembrane segment spans residues 318-338 (TFITFSFFNICDNLLACYIID). Residues 339–346 (KFSTMTYT) are Cytoplasmic-facing. The chain crosses the membrane as a helical span at residues 347–367 (IVSCIQGPAITIAYYFKFLAG). Residues 368–377 (DAVRKPRILD) lie on the Vacuolar side of the membrane. Residues 378–398 (FLTLFGYLFGTIIYRIGNIIL) traverse the membrane as a helical segment. Residues 399–424 (EKKKMVKSQNSNDSEAELTCIETSTA) are Cytoplasmic-facing.

The protein belongs to the CRT-like transporter family.

The protein localises to the vacuole membrane. Its function is as follows. Nutrient transporter. Involved in maintaining the osmotic homeostasis of the digestive vacuole. The polypeptide is Putative chloroquine resistance transporter (Plasmodium yoelii yoelii).